A 101-amino-acid polypeptide reads, in one-letter code: Small ribosomal subunit protein uS14 (101 aa).

This sequence belongs to the universal ribosomal protein uS14 family. As to quaternary structure, part of the 30S ribosomal subunit. Contacts proteins S3 and S10.

Binds 16S rRNA, required for the assembly of 30S particles and may also be responsible for determining the conformation of the 16S rRNA at the A site. In Ruthia magnifica subsp. Calyptogena magnifica, this protein is Small ribosomal subunit protein uS14.